We begin with the raw amino-acid sequence, 362 residues long: Peptide chain release factor 1 (362 aa).

Gln-237 is modified (N5-methylglutamine).

Belongs to the prokaryotic/mitochondrial release factor family. Methylated by PrmC. Methylation increases the termination efficiency of RF1.

It localises to the cytoplasm. Peptide chain release factor 1 directs the termination of translation in response to the peptide chain termination codons UAG and UAA. This is Peptide chain release factor 1 from Vibrio campbellii (strain ATCC BAA-1116).